Here is a 138-residue protein sequence, read N- to C-terminus: Large ribosomal subunit protein bL19 (138 aa).

This sequence belongs to the bacterial ribosomal protein bL19 family.

In terms of biological role, this protein is located at the 30S-50S ribosomal subunit interface and may play a role in the structure and function of the aminoacyl-tRNA binding site. This chain is Large ribosomal subunit protein bL19, found in Rickettsia felis (strain ATCC VR-1525 / URRWXCal2) (Rickettsia azadi).